Consider the following 2115-residue polypeptide: Nuclear mitotic apparatus protein 1 (2115 aa).

A head (Globular) region spans residues 1–212 (MTLHATRGAA…SPMGDILQTP (212 aa)). S162 carries the post-translational modification Phosphoserine. Position 163 is a phosphothreonine (T163). Phosphoserine occurs at positions 169 and 203. Position 211 is a phosphothreonine (T211). Positions 213–1699 (QFQMRRLKKQ…ADQQLRDLGK (1487 aa)) form a coiled coil. S271 carries the post-translational modification Phosphoserine. K379 carries the post-translational modification N6-acetyllysine. Phosphoserine occurs at positions 388 and 395. Over residues 549–560 (LRHQVEQLSSSL) the composition is skewed to low complexity. Disordered regions lie at residues 549 to 593 (LRHQ…EERE) and 746 to 766 (LVEQ…GRKG). Over residues 561–581 (KQKEQQLKEVAEKQEATRQDH) the composition is skewed to basic and acidic residues. S820 is modified (phosphoserine). N6-acetyllysine is present on K891. Basic and acidic residues-rich tracts occupy residues 926–950 (AGEQ…RQPE) and 996–1013 (QEER…TQER). Disordered regions lie at residues 926 to 958 (AGEQ…QQGR) and 988 to 1013 (LMES…TQER). At T1047 the chain carries Phosphothreonine; by PLK1. Positions 1090 to 1102 (LKEQLAKKEKEHA) are enriched in basic and acidic residues. Disordered stretches follow at residues 1090 to 1225 (LKEQ…RKNS) and 1275 to 1296 (ETAS…EVQS). Low complexity-rich tracts occupy residues 1103–1112 (SGSGAQSEAA) and 1133–1142 (EQQCQKQQEQ). Basic and acidic residues predominate over residues 1145-1163 (SLERSLEAERASRAERDSA). A Phosphoserine modification is found at S1187. The span at 1198–1224 (KVQDHSKAEDEWKAQVARGRQEAERKN) shows a compositional bias: basic and acidic residues. The residue at position 1225 (S1225) is a Phosphoserine. Positions 1283-1296 (AAERSSALREEVQS) are enriched in basic and acidic residues. Position 1511 is an N6-acetyllysine (K1511). At S1601 the chain carries Phosphoserine. Residue K1699 forms a Glycyl lysine isopeptide (Lys-Gly) (interchain with G-Cter in SUMO2) linkage. Residues 1699–1876 (KFQVATDALK…NSALLSLPGY (178 aa)) form a membrane-binding domain 1 region. Residues 1700–2115 (FQVATDALKS…TPRAKGKAKH (416 aa)) form a tail (Globular) region. Residues S1721, S1724, and S1728 each carry the phosphoserine modification. The interval 1734–1761 (PLSITSKLPRTQPDGTSVPGEPASPISQ) is disordered. Residues 1735–1748 (LSITSKLPRTQPDG) show a composition bias toward polar residues. The Tankyrase-binding domain motif lies at 1742 to 1748 (PRTQPDG). A phosphoserine mark is found at S1757 and S1760. K1766 is covalently cross-linked (Glycyl lysine isopeptide (Lys-Gly) (interchain with G-Cter in SUMO1); alternate). K1766 is covalently cross-linked (Glycyl lysine isopeptide (Lys-Gly) (interchain with G-Cter in SUMO2); alternate). S1769 and S1772 each carry phosphoserine; by PLK1. Y1774 bears the Phosphotyrosine mark. Residue T1776 is modified to Phosphothreonine. At S1788 the chain carries Phosphoserine. A 4.1-binding domain region spans residues 1788 to 1810 (SSLDSLGDVFLDSGRKTRSARRR). At S1789 the chain carries Phosphoserine; by PLK1. A phosphoserine mark is found at S1792 and S1800. A Phosphothreonine modification is found at T1804. A Glycyl lysine isopeptide (Lys-Gly) (interchain with G-Cter in SUMO2) cross-link involves residue K1822. Disordered regions lie at residues 1826–1901 (EEPD…GRNS) and 1955–2115 (EMKT…KAKH). A phosphoserine mark is found at S1830 and S1833. Residues 1830-1857 (SANSSFYSTRSAPASQASLRATSSTQSL) are compositionally biased toward polar residues. A Phosphoserine; by PLK1 modification is found at S1834. Y1836 is subject to Phosphotyrosine. Phosphoserine is present on S1840. S1844 is modified (phosphoserine; alternate). An O-linked (GlcNAc) serine; alternate glycan is attached at S1844. Phosphoserine occurs at positions 1862 and 1887. The segment covering 1879–1891 (TTRSSARRSQAGV) has biased composition (polar residues). Residues 1882–1985 (SSARRSQAGV…AEGTGITTRQ (104 aa)) form a tubulin-binding domain region. The tract at residues 1892–1926 (SSGAPPGRNSFYMGTCQDEPEQLDDWNRIAELQQR) is GPSM2-binding domain. Basic and acidic residues predominate over residues 1955–1966 (EMKTGDPQETLR). S1969 is modified (phosphoserine). Residues 1981-2060 (ITTRQQRKRV…SILNTPKKLG (80 aa)) are membrane-binding domain 2. Positions 1984–1989 (RQQRKR) match the Nuclear localization signal motif. Residue S1991 is modified to Phosphoserine. T2000 bears the Phosphothreonine mark. Residue S2003 is modified to Phosphoserine. A Phosphothreonine; by CDK1 modification is found at T2015. Basic and acidic residues predominate over residues 2015-2032 (TPRDRHEGRKQSTTEAQK). Phosphoserine is present on S2047. T2055 carries the phosphothreonine; by CDK1 modification. Phosphoserine occurs at positions 2062 and 2077. The residue at position 2087 (S2087) is a Phosphoserine; by CDK1. Positions 2089-2108 (RIATTTASAATAAAIGATPR) are enriched in low complexity. T2106 is modified (phosphothreonine; by CDK1).

As to quaternary structure, homodimer. Also forms multiarm oligomers by association of C-terminal tail domains, oligomers may further assemble to form a hexagonal nuclear lattice-like network. Associates with the dynein-dynactin complex; this association promotes the transport and accumulation of NUMA1 at the mitotic spindle poles that is inhibited by the BRISC complex in a PLK1-dependent manner. Part of a spindle orientation complex at least composed of GNAI1, GPSM2 and NUMA1. Interacts (via C-terminus) with microtubules (MTs); this interaction is direct and promotes both MT bundle formation and stability in a dynein-dynactin complex- and CDK1-independent manner. Interacts with EPB41 and EPB41L2; these interactions are negatively regulated by CDK1 during metaphase and are important for anaphase-specific localization of NUMA1 in symmetrically dividing cells. Interacts (via C-terminus) with GPSM2 (via TPR repeats); this interaction is direct, prevented by competitive binding of INSC, is inhibited in a PLK1-dependent manner, blocks the association of NUMA1 with MTs and inhibits NUMA1-induced MT bundle formation, prevents the association of NUMA1 with SPAG5, induces mitotic spindle pole localization of GPSM2, both metaphase cell cortex localization of NUMA1 and mitotic spindle organization. Does not interact with GPSM2 during anaphase. Interacts (via C-terminus) with the nuclear importin alpha/importin beta receptor; this interaction is inhibited by RanGTP. Interacts (via C-terminus) with KPNB1; this interaction is inhibited by RanGTP and the BRISC complex. Interacts with ABRAXAS2 and the BRISC complex; these interactions regulate mitotic spindle assembly. Interacts (via N-terminal end of the coiled-coil domain) with RAE1; this interaction promotes mitotic spindle formation. Interacts (via C-terminus) with SPAG5 (via C-terminus); this interaction promotes the recruitment of SPAG5 to the MTs at spindle poles in a dynein-dynactin-dependent manner and regulates mitotic spindle organization and proper chromosome alignment during mitosis. Interacts with TNKS; this interaction occurs at the onset of mitosis. Interacts with TNKS2. Interacts with tubulin. Interacts with KHDC3L (via C-terminus). Post-translationally, phosphorylation and dephosphorylation on Thr-2055 regulates the extent of cortical NUMA1 and the dynein-dynactin complex localization during mitotic metaphase and anaphase. In metaphase, phosphorylation on Thr-2055 occurs in a kinase CDK1-dependent manner; this phosphorylation maintains low levels of cortical dynein-dynactin complex at metaphase, and hence proper spindle positioning. In anaphase, dephosphorylated on Thr-2055 by phosphatase PPP2CA; this dephosphorylation stimulates its membrane association and with the dynein-dynactin complex its enrichment at the cell cortex, and hence robust spindle elongation. Probably also phosphorylated on Thr-2015 and Ser-2087 by CDK1; these phosphorylations may regulate its cell cortex recruitment during metaphase and anaphase. Phosphorylated on Thr-1047, Ser-1769, Ser-1772, Ser-1789 and Ser-1834 by PLK1; these phosphorylations induce cortical dynein-dynactin complex dissociation from the NUMA1-GPSM2 complex and negatively regulates cortical dynein-dynactin complex localization. ADP-ribosylated by TNKS at the onset of mitosis; ADP-ribosylation is not required for its localization to spindle poles. In terms of processing, O-glycosylated during cytokinesis at sites identical or close to phosphorylation sites, this interferes with the phosphorylation status. Post-translationally, ubiquitinated with 'Lys-63'-linked polyubiquitin chains. Deubiquitination by the BRISC complex is important for the incorporation of NUMA1 into mitotic spindle poles and normal spindle pole function, probably by modulating interactions between NUMA1, dynein-dynactin complex and importin-beta.

It localises to the nucleus. It is found in the nucleoplasm. The protein localises to the nucleus matrix. Its subcellular location is the chromosome. The protein resides in the cytoplasm. It localises to the cytoskeleton. It is found in the microtubule organizing center. The protein localises to the centrosome. Its subcellular location is the spindle pole. The protein resides in the cell cortex. It localises to the cell membrane. It is found in the lateral cell membrane. The protein localises to the cytosol. Microtubule (MT)-binding protein that plays a role in the formation and maintenance of the spindle poles and the alignement and the segregation of chromosomes during mitotic cell division. Functions to tether the minus ends of MTs at the spindle poles, which is critical for the establishment and maintenance of the spindle poles. Plays a role in the establishment of the mitotic spindle orientation during metaphase and elongation during anaphase in a dynein-dynactin-dependent manner. In metaphase, part of a ternary complex composed of GPSM2 and G(i) alpha proteins, that regulates the recruitment and anchorage of the dynein-dynactin complex in the mitotic cell cortex regions situated above the two spindle poles, and hence regulates the correct oritentation of the mitotic spindle. During anaphase, mediates the recruitment and accumulation of the dynein-dynactin complex at the cell membrane of the polar cortical region through direct association with phosphatidylinositol 4,5-bisphosphate (PI(4,5)P2), and hence participates in the regulation of the spindle elongation and chromosome segregation. Also binds to other polyanionic phosphoinositides, such as phosphatidylinositol 3-phosphate (PIP), lysophosphatidic acid (LPA) and phosphatidylinositol triphosphate (PIP3), in vitro. Also required for proper orientation of the mitotic spindle during asymmetric cell divisions. Plays a role in mitotic MT aster assembly. Involved in anastral spindle assembly. Positively regulates TNKS protein localization to spindle poles in mitosis. Highly abundant component of the nuclear matrix where it may serve a non-mitotic structural role, occupies the majority of the nuclear volume. Required for epidermal differentiation and hair follicle morphogenesis. The sequence is that of Nuclear mitotic apparatus protein 1 from Homo sapiens (Human).